A 269-amino-acid chain; its full sequence is Indole-3-glycerol phosphate synthase (269 aa).

Belongs to the TrpC family.

It carries out the reaction 1-(2-carboxyphenylamino)-1-deoxy-D-ribulose 5-phosphate + H(+) = (1S,2R)-1-C-(indol-3-yl)glycerol 3-phosphate + CO2 + H2O. The protein operates within amino-acid biosynthesis; L-tryptophan biosynthesis; L-tryptophan from chorismate: step 4/5. This is Indole-3-glycerol phosphate synthase from Roseiflexus castenholzii (strain DSM 13941 / HLO8).